A 201-amino-acid chain; its full sequence is 3-isopropylmalate dehydratase small subunit (201 aa).

This sequence belongs to the LeuD family. LeuD type 1 subfamily. As to quaternary structure, heterodimer of LeuC and LeuD.

It catalyses the reaction (2R,3S)-3-isopropylmalate = (2S)-2-isopropylmalate. It participates in amino-acid biosynthesis; L-leucine biosynthesis; L-leucine from 3-methyl-2-oxobutanoate: step 2/4. Functionally, catalyzes the isomerization between 2-isopropylmalate and 3-isopropylmalate, via the formation of 2-isopropylmaleate. The protein is 3-isopropylmalate dehydratase small subunit of Cereibacter sphaeroides (strain ATCC 17029 / ATH 2.4.9) (Rhodobacter sphaeroides).